The following is a 91-amino-acid chain: Small ribosomal subunit protein uS19 (91 aa).

Belongs to the universal ribosomal protein uS19 family.

Protein S19 forms a complex with S13 that binds strongly to the 16S ribosomal RNA. The polypeptide is Small ribosomal subunit protein uS19 (Ralstonia nicotianae (strain ATCC BAA-1114 / GMI1000) (Ralstonia solanacearum)).